A 439-amino-acid polypeptide reads, in one-letter code: MKNIIKHDAYDKKAYERFLKNSKYLQKLISYYSQYHPIHEKLAEDTFYAFFKYVVEFNEYVEEKFKINKAILEGAIKNIEYEKSKLLTELDEVNAGTATIMFCEKFFENLKLAKLNKELKKFASEGKGEGLEDKLKEIAKNTMKDIAEEVSEVIQGFNAVENFGKGEGDKKLLSPEDRIKLADKILQNKKIREIVKKLGKLRLLAINEYKSKIKHYSGEIYSTKIGRDLKHLLPKEIVNLSDEILYYDFLRRFVDKKLLIYDIQNKLEKQKGPIIILLDHSGSMYGDREIWGKAVALSIIEIAKRENRDIYYIAFDDGVRFEKKINPKTITFDEIIEIASLYFGGGTNFIMPLNRAMSIIKEHETFKNADILLITDGYAEVNDVFLKEFDKFKNEYNAKLISVFVETFPTETLKAISDEVIKVYDLADEEARKIYKSIS.

One can recognise a VWFA domain in the interval Pro-273–Ser-439.

This is an uncharacterized protein from Methanocaldococcus jannaschii (strain ATCC 43067 / DSM 2661 / JAL-1 / JCM 10045 / NBRC 100440) (Methanococcus jannaschii).